We begin with the raw amino-acid sequence, 29 residues long: Cytochrome b6-f complex subunit 8 (29 aa).

A helical transmembrane segment spans residues 3-23; that stretch reads ILTLGWVSILALFTWSIAMVV.

The protein belongs to the PetN family. As to quaternary structure, the 4 large subunits of the cytochrome b6-f complex are cytochrome b6, subunit IV (17 kDa polypeptide, PetD), cytochrome f and the Rieske protein, while the 4 small subunits are PetG, PetL, PetM and PetN. The complex functions as a dimer.

The protein localises to the cellular thylakoid membrane. In terms of biological role, component of the cytochrome b6-f complex, which mediates electron transfer between photosystem II (PSII) and photosystem I (PSI), cyclic electron flow around PSI, and state transitions. In Microcystis aeruginosa (strain NIES-843 / IAM M-2473), this protein is Cytochrome b6-f complex subunit 8.